Reading from the N-terminus, the 236-residue chain is Uridylate kinase (236 aa).

Residue 10–13 (KLSG) coordinates ATP. Residue Gly-52 coordinates UMP. 2 residues coordinate ATP: Gly-53 and Arg-57. UMP is bound by residues Asp-72 and 133 to 140 (TGNPFFTT). ATP is bound by residues Thr-160, Tyr-166, and Asp-169.

Belongs to the UMP kinase family. As to quaternary structure, homohexamer.

The protein resides in the cytoplasm. It carries out the reaction UMP + ATP = UDP + ADP. Its pathway is pyrimidine metabolism; CTP biosynthesis via de novo pathway; UDP from UMP (UMPK route): step 1/1. Its activity is regulated as follows. Inhibited by UTP. In terms of biological role, catalyzes the reversible phosphorylation of UMP to UDP. This Ralstonia nicotianae (strain ATCC BAA-1114 / GMI1000) (Ralstonia solanacearum) protein is Uridylate kinase.